Consider the following 174-residue polypeptide: Transcription antitermination protein NusB (174 aa).

This sequence belongs to the NusB family.

In terms of biological role, involved in transcription antitermination. Required for transcription of ribosomal RNA (rRNA) genes. Binds specifically to the boxA antiterminator sequence of the ribosomal RNA (rrn) operons. The sequence is that of Transcription antitermination protein NusB from Rhodopseudomonas palustris (strain ATCC BAA-98 / CGA009).